The following is a 642-amino-acid chain: MVGRIPDRDIAAIRERVCIEEVVGDYVQLRRAGADSLKGLCPFHNEKSPSFHVRPNHGHFHCFGCSEGGDVYAFIQKIEHVSFVEAVEMLADRIGHTINYFGTATSVQRDRGSRSRLIAANAAAAAFYAAALESDEAAPARQYLMERNFDANAARHFGCGFAPSGWDSLTKYLISKGFEFTELEAAGLSRQGRRGPMDRFHRRLLWPILTLAGEVIGFGARRLFDDDPMEAKYVNTPETLLYKKSSVMFGIDLAKRDIVKGHQAVVVEGYTDVMAMHLAGVTTAVASCGTAFGDEHLAMLRRLIMDDNWYRGELIFVFDGDAAGQAAALKAFDGDQQVAGKSFVAVAADGMDPCDLRLSSGDQALRDLVACRKPMFEFAIRSLIPDGMVLDDDPQAKVDALRRSVPLVARIRDYALRDEYARRLAGWTGWSDEGQVLARVREEANRRSVPERTRRRSVSVEQSPFMQPPGAPADQLAARPDPRDPTLWPQREALKSVLQYPVLAGPVFDTLTVESFTHPGYGAVRAAIDAAGGASAGITGAQWIDVVRQQTTSALIAGLINELGVESIQVDDEKLPRYIDGVLARLQEVWMGRQIAEVKSKLQRMSPIDQGDEYHELFGDLVAMEAYRRSLLEQASGDDMTA.

The CHC2-type zinc-finger motif lies at 41-65; the sequence is CPFHNEKSPSFHVRPNHGHFHCFGC. The region spanning 262–348 is the Toprim domain; that stretch reads HQAVVVEGYT…AGKSFVAVAA (87 aa). Residues E268, D319, and D321 each coordinate Mg(2+). Residues 445-480 form a disordered region; the sequence is NRRSVPERTRRRSVSVEQSPFMQPPGAPADQLAARP.

The protein belongs to the DnaG primase family. Monomer. Interacts with DnaB. Zn(2+) is required as a cofactor. It depends on Mg(2+) as a cofactor.

The catalysed reaction is ssDNA + n NTP = ssDNA/pppN(pN)n-1 hybrid + (n-1) diphosphate.. Functionally, RNA polymerase that catalyzes the synthesis of short RNA molecules used as primers for DNA polymerase during DNA replication. This Mycobacterium leprae (strain TN) protein is DNA primase.